A 122-amino-acid polypeptide reads, in one-letter code: MSQASRALKAYRNALRATSVAFKNDVATLDAARNEIRTHMKSQEDPKGTNRSIDERLKLLDEVTVFLRHNIVQGRKVDEGKYRLNIHKDTELGDNDDIKKKKDGLSNGGFTGCCGGSGAKTT.

Residues 1–17 (MSQASRALKAYRNALRA) constitute a mitochondrion transit peptide. Residues 92–104 (LGDNDDIKKKKDG) are compositionally biased toward basic and acidic residues. A disordered region spans residues 92–122 (LGDNDDIKKKKDGLSNGGFTGCCGGSGAKTT). Residues 106–122 (SNGGFTGCCGGSGAKTT) show a composition bias toward gly residues.

This sequence belongs to the complex I LYR family. MZM1 subfamily. As to quaternary structure, interacts with RIP1.

The protein localises to the mitochondrion matrix. Its function is as follows. Assembly factor required for Rieske Fe-S protein RIP1 incorporation into the cytochrome b-c1 (CIII) complex. Functions as a chaperone, binding to this subunit within the mitochondrial matrix and stabilizing it prior to its translocation and insertion into the late CIII dimeric intermediate within the mitochondrial inner membrane. Modulates the mitochondrial matrix zinc pool. This is Mitochondrial zinc maintenance protein 1, mitochondrial (MZM1) from Komagataella phaffii (strain GS115 / ATCC 20864) (Yeast).